A 1480-amino-acid polypeptide reads, in one-letter code: Nonribosomal peptide synthetase inpA (1480 aa).

Low complexity predominate over residues 1 to 17 (MSHSMSSSSSSSSSSSS). The tract at residues 1 to 24 (MSHSMSSSSSSSSSSSSSRDEGQS) is disordered. The condensation stretch occupies residues 44 to 458 (VQDVYPCTPL…QLISPQDLDQ (415 aa)). An adenylation region spans residues 479 to 871 (QRHIDTRPDA…GRKDSQVKIR (393 aa)). Residues 1003–1082 (DSTNKVALRL…GLAAMITSPH (80 aa)) enclose the Carrier domain. Residue Ser1041 is modified to O-(pantetheine 4'-phosphoryl)serine. The interval 1117-1436 (KVFLTGATGL…VLAMLQDPQM (320 aa)) is thioesterase (TE) domain.

The protein belongs to the NRP synthetase family.

It functions in the pathway secondary metabolite biosynthesis. In terms of biological role, nonribosomal peptide synthetase; part of the inp gene cluster that mediates the biosynthesis of fellutamide B, a mycotoxin that acts as a proteasome inhibitor. In the first step of fellutabmide B biosynthesis, inpC activates 3-hydroxydodecanoic acid to generate 3-hydroxydodecanoyl-AMP that is then loaded onto the T0 domain of inpB. The 3-hydroxydodecanoyl-S-phosphopantetheinyl-T0 is sequentially extended with L-Asn and L-Gln by the two CAT modules of inpB. The linear lipodipeptide from inpB is then transferred onto inpA for the addition of the third amino acid, L-Leu. Reductive releasing of the lipotripeptide by the TE domain of inpA produces (2S)-fellutamide B. InpF might be involved in the release and transfer of the lipodipeptide from inpB to inpA. The inp cluster-encoded proteasome subunit inpE confers resistance to internally produced fellutamides. The MFS efflux transporter inpD may contribute to fellutamide resistance as well. This Emericella nidulans (strain FGSC A4 / ATCC 38163 / CBS 112.46 / NRRL 194 / M139) (Aspergillus nidulans) protein is Nonribosomal peptide synthetase inpA.